The following is a 301-amino-acid chain: Beta-1,3-galactosyltransferase 5 (301 aa).

Topologically, residues 1–7 (MAFPKMR) are cytoplasmic. The helical; Signal-anchor for type II membrane protein transmembrane segment at 8-28 (LMYVCLLVLGALCLYFSMYSL) threads the bilayer. Residues 29–301 (NLFKEQSFVY…LLDYWQALEN (273 aa)) are Lumenal-facing. N-linked (GlcNAc...) asparagine glycans are attached at residues Asn130, Asn174, and Asn231.

This sequence belongs to the glycosyltransferase 31 family.

It localises to the golgi apparatus membrane. It carries out the reaction a globoside Gb4Cer (d18:1(4E)) + UDP-alpha-D-galactose = a globoside GalGb4Cer (d18:1(4E)) + UDP + H(+). It participates in protein modification; protein glycosylation. Catalyzes the transfer of Gal to GlcNAc-based acceptors with a preference for the core3 O-linked glycan GlcNAc(beta1,3)GalNAc structure. Can use glycolipid LC3Cer as an efficient acceptor. In Pan paniscus (Pygmy chimpanzee), this protein is Beta-1,3-galactosyltransferase 5 (B3GALT5).